The sequence spans 465 residues: Fumarate hydratase class II (465 aa).

Residues 98–100 (SGT), Arg126, 129–132 (HPND), 139–141 (SSN), and Thr187 each bind substrate. His188 acts as the Proton donor/acceptor in catalysis. Ser318 is an active-site residue. Residues Ser319 and 324 to 326 (KVN) contribute to the substrate site.

This sequence belongs to the class-II fumarase/aspartase family. Fumarase subfamily. In terms of assembly, homotetramer.

It localises to the cytoplasm. The catalysed reaction is (S)-malate = fumarate + H2O. Its pathway is carbohydrate metabolism; tricarboxylic acid cycle; (S)-malate from fumarate: step 1/1. Functionally, involved in the TCA cycle. Catalyzes the stereospecific interconversion of fumarate to L-malate. The protein is Fumarate hydratase class II of Yersinia pestis.